Reading from the N-terminus, the 390-residue chain is Cathepsin D (390 aa).

A propeptide spans 1–44 (activation peptide); the sequence is VIRIPLHKFTSIRRTMSEAAGXVXXLIAKGPISKYATGEPAVRQ. One can recognise a Peptidase A1 domain in the interval 59-385; sequence YYGEIGIGTP…DRDQNRVGLA (327 aa). Disulfide bonds link cysteine 71–cysteine 140 and cysteine 90–cysteine 97. Aspartate 77 is a catalytic residue. N-linked (GlcNAc...) asparagine glycosylation is found at asparagine 114 and asparagine 241. Cysteine 264 and cysteine 268 are disulfide-bonded. Aspartate 273 is an active-site residue. Residues cysteine 307 and cysteine 344 are joined by a disulfide bond.

It belongs to the peptidase A1 family. In terms of assembly, consists of a light chain and a heavy chain. Interacts with ADAM30; this leads to activation of CTSD. Interacts with GRN; stabilizes CTSD; increases its proteolytic activity. In terms of processing, N- and O-glycosylated. Undergoes proteolytic cleavage and activation by ADAM30.

It localises to the lysosome. The protein resides in the melanosome. Its subcellular location is the secreted. The protein localises to the extracellular space. It carries out the reaction Specificity similar to, but narrower than, that of pepsin A. Does not cleave the 4-Gln-|-His-5 bond in B chain of insulin.. Its function is as follows. Acid protease active in intracellular protein breakdown. Plays a role in APP processing following cleavage and activation by ADAM30 which leads to APP degradation. This Bos taurus (Bovine) protein is Cathepsin D (CTSD).